Reading from the N-terminus, the 37-residue chain is Large ribosomal subunit protein bL36c (37 aa).

It belongs to the bacterial ribosomal protein bL36 family.

Its subcellular location is the plastid. The protein resides in the chloroplast. The polypeptide is Large ribosomal subunit protein bL36c (Stigeoclonium helveticum (Green alga)).